A 137-amino-acid polypeptide reads, in one-letter code: Large ribosomal subunit protein uL16 (137 aa).

The disordered stretch occupies residues 1–22 (MLQPKRTKFRKVQKGRNRGLAH).

It belongs to the universal ribosomal protein uL16 family. Part of the 50S ribosomal subunit.

Functionally, binds 23S rRNA and is also seen to make contacts with the A and possibly P site tRNAs. In Chromohalobacter salexigens (strain ATCC BAA-138 / DSM 3043 / CIP 106854 / NCIMB 13768 / 1H11), this protein is Large ribosomal subunit protein uL16.